Here is a 373-residue protein sequence, read N- to C-terminus: UDP-N-acetylglucosamine--N-acetylmuramyl-(pentapeptide) pyrophosphoryl-undecaprenol N-acetylglucosamine transferase (373 aa).

Residues 10-12, Asn124, Arg166, Ser196, and Gln301 contribute to the UDP-N-acetyl-alpha-D-glucosamine site; that span reads TGG.

Belongs to the glycosyltransferase 28 family. MurG subfamily.

It localises to the cell membrane. The enzyme catalyses di-trans,octa-cis-undecaprenyl diphospho-N-acetyl-alpha-D-muramoyl-L-alanyl-D-glutamyl-meso-2,6-diaminopimeloyl-D-alanyl-D-alanine + UDP-N-acetyl-alpha-D-glucosamine = di-trans,octa-cis-undecaprenyl diphospho-[N-acetyl-alpha-D-glucosaminyl-(1-&gt;4)]-N-acetyl-alpha-D-muramoyl-L-alanyl-D-glutamyl-meso-2,6-diaminopimeloyl-D-alanyl-D-alanine + UDP + H(+). The protein operates within cell wall biogenesis; peptidoglycan biosynthesis. Functionally, cell wall formation. Catalyzes the transfer of a GlcNAc subunit on undecaprenyl-pyrophosphoryl-MurNAc-pentapeptide (lipid intermediate I) to form undecaprenyl-pyrophosphoryl-MurNAc-(pentapeptide)GlcNAc (lipid intermediate II). This is UDP-N-acetylglucosamine--N-acetylmuramyl-(pentapeptide) pyrophosphoryl-undecaprenol N-acetylglucosamine transferase from Desulforudis audaxviator (strain MP104C).